The chain runs to 143 residues: Large ribosomal subunit protein uL11 (143 aa).

This sequence belongs to the universal ribosomal protein uL11 family. As to quaternary structure, part of the ribosomal stalk of the 50S ribosomal subunit. Interacts with L10 and the large rRNA to form the base of the stalk. L10 forms an elongated spine to which L12 dimers bind in a sequential fashion forming a multimeric L10(L12)X complex. Post-translationally, one or more lysine residues are methylated.

Its function is as follows. Forms part of the ribosomal stalk which helps the ribosome interact with GTP-bound translation factors. The sequence is that of Large ribosomal subunit protein uL11 from Verminephrobacter eiseniae (strain EF01-2).